We begin with the raw amino-acid sequence, 346 residues long: Probable RNA methyltransferase PA1839 (346 aa).

The active-site Proton acceptor is the E91. One can recognise a Radical SAM core domain in the interval 94 to 320; that stretch reads LLPRGGLCVS…TKVRNSAGQD (227 aa). A disulfide bridge connects residues C101 and C325. [4Fe-4S] cluster contacts are provided by C108, C112, and C115. S-adenosyl-L-methionine contacts are provided by residues 153-154, S183, 206-208, and N282; these read GE and SLH. Residue C325 is the S-methylcysteine intermediate of the active site.

This sequence belongs to the radical SAM superfamily. RlmN family. The cofactor is [4Fe-4S] cluster.

It is found in the cytoplasm. This chain is Probable RNA methyltransferase PA1839, found in Pseudomonas aeruginosa (strain ATCC 15692 / DSM 22644 / CIP 104116 / JCM 14847 / LMG 12228 / 1C / PRS 101 / PAO1).